Consider the following 1415-residue polypeptide: DNA-directed RNA polymerase subunit beta' (1415 aa).

Zn(2+) is bound by residues Cys72, Cys74, Cys87, and Cys90. Mg(2+)-binding residues include Asp463, Asp465, and Asp467. Residues Cys812, Cys886, Cys893, and Cys896 each coordinate Zn(2+).

This sequence belongs to the RNA polymerase beta' chain family. In terms of assembly, the RNAP catalytic core consists of 2 alpha, 1 beta, 1 beta' and 1 omega subunit. When a sigma factor is associated with the core the holoenzyme is formed, which can initiate transcription. Mg(2+) serves as cofactor. The cofactor is Zn(2+).

It catalyses the reaction RNA(n) + a ribonucleoside 5'-triphosphate = RNA(n+1) + diphosphate. Its function is as follows. DNA-dependent RNA polymerase catalyzes the transcription of DNA into RNA using the four ribonucleoside triphosphates as substrates. The chain is DNA-directed RNA polymerase subunit beta' from Dinoroseobacter shibae (strain DSM 16493 / NCIMB 14021 / DFL 12).